Reading from the N-terminus, the 225-residue chain is 2-C-methyl-D-erythritol 4-phosphate cytidylyltransferase (225 aa).

This sequence belongs to the IspD/TarI cytidylyltransferase family. IspD subfamily.

The enzyme catalyses 2-C-methyl-D-erythritol 4-phosphate + CTP + H(+) = 4-CDP-2-C-methyl-D-erythritol + diphosphate. Its pathway is isoprenoid biosynthesis; isopentenyl diphosphate biosynthesis via DXP pathway; isopentenyl diphosphate from 1-deoxy-D-xylulose 5-phosphate: step 2/6. In terms of biological role, catalyzes the formation of 4-diphosphocytidyl-2-C-methyl-D-erythritol from CTP and 2-C-methyl-D-erythritol 4-phosphate (MEP). In Cereibacter sphaeroides (strain KD131 / KCTC 12085) (Rhodobacter sphaeroides), this protein is 2-C-methyl-D-erythritol 4-phosphate cytidylyltransferase.